Here is a 61-residue protein sequence, read N- to C-terminus: Large ribosomal subunit protein uL30 (61 aa).

This sequence belongs to the universal ribosomal protein uL30 family. Part of the 50S ribosomal subunit.

The sequence is that of Large ribosomal subunit protein uL30 from Chlorobium phaeobacteroides (strain BS1).